We begin with the raw amino-acid sequence, 152 residues long: Small ribosomal subunit protein uS11 (152 aa).

The interval 133–152 (VTPIPTDSTRRKSGHRGRRL) is disordered. A compositionally biased stretch (basic residues) spans 143 to 152 (RKSGHRGRRL).

Belongs to the universal ribosomal protein uS11 family. As to quaternary structure, component of the small ribosomal subunit. Part of the small subunit (SSU) processome, composed of more than 70 proteins and the RNA chaperone small nucleolar RNA (snoRNA) U3.

It localises to the cytoplasm. It is found in the nucleus. Its subcellular location is the nucleolus. Functionally, component of the small ribosomal subunit. The ribosome is a large ribonucleoprotein complex responsible for the synthesis of proteins in the cell. Part of the small subunit (SSU) processome, first precursor of the small eukaryotic ribosomal subunit. During the assembly of the SSU processome in the nucleolus, many ribosome biogenesis factors, an RNA chaperone and ribosomal proteins associate with the nascent pre-rRNA and work in concert to generate RNA folding, modifications, rearrangements and cleavage as well as targeted degradation of pre-ribosomal RNA by the RNA exosome. In Dictyostelium discoideum (Social amoeba), this protein is Small ribosomal subunit protein uS11 (rps14).